The sequence spans 54 residues: Large ribosomal subunit protein bL32c (54 aa).

The protein belongs to the bacterial ribosomal protein bL32 family.

The protein resides in the plastid. It localises to the chloroplast. The polypeptide is Large ribosomal subunit protein bL32c (Piper cenocladum (Ant piper)).